We begin with the raw amino-acid sequence, 513 residues long: ATP synthase subunit alpha (513 aa).

Residue 169 to 176 (GDRQTGKT) coordinates ATP.

Belongs to the ATPase alpha/beta chains family. As to quaternary structure, F-type ATPases have 2 components, CF(1) - the catalytic core - and CF(0) - the membrane proton channel. CF(1) has five subunits: alpha(3), beta(3), gamma(1), delta(1), epsilon(1). CF(0) has three main subunits: a(1), b(2) and c(9-12). The alpha and beta chains form an alternating ring which encloses part of the gamma chain. CF(1) is attached to CF(0) by a central stalk formed by the gamma and epsilon chains, while a peripheral stalk is formed by the delta and b chains.

The protein resides in the cell inner membrane. It carries out the reaction ATP + H2O + 4 H(+)(in) = ADP + phosphate + 5 H(+)(out). In terms of biological role, produces ATP from ADP in the presence of a proton gradient across the membrane. The alpha chain is a regulatory subunit. The polypeptide is ATP synthase subunit alpha (Vibrio cholerae serotype O1 (strain ATCC 39541 / Classical Ogawa 395 / O395)).